We begin with the raw amino-acid sequence, 279 residues long: Pantothenate synthetase (279 aa).

26–33 (MGNLHEGH) lines the ATP pocket. Catalysis depends on His-33, which acts as the Proton donor. Residue Gln-57 participates in (R)-pantoate binding. Gln-57 lines the beta-alanine pocket. 144–147 (GKKD) is a binding site for ATP. Gln-150 lines the (R)-pantoate pocket. Residues Val-173 and 181-184 (LSSR) each bind ATP.

The protein belongs to the pantothenate synthetase family. In terms of assembly, homodimer.

Its subcellular location is the cytoplasm. It carries out the reaction (R)-pantoate + beta-alanine + ATP = (R)-pantothenate + AMP + diphosphate + H(+). It functions in the pathway cofactor biosynthesis; (R)-pantothenate biosynthesis; (R)-pantothenate from (R)-pantoate and beta-alanine: step 1/1. Its function is as follows. Catalyzes the condensation of pantoate with beta-alanine in an ATP-dependent reaction via a pantoyl-adenylate intermediate. This chain is Pantothenate synthetase, found in Burkholderia thailandensis (strain ATCC 700388 / DSM 13276 / CCUG 48851 / CIP 106301 / E264).